The following is a 642-amino-acid chain: 1-deoxy-D-xylulose-5-phosphate synthase (642 aa).

Thiamine diphosphate-binding positions include H79 and 120 to 122; that span reads AHS. Mg(2+) is bound at residue D155. Residues 156–157, N184, Y293, and E375 each bind thiamine diphosphate; that span reads GS. N184 is a binding site for Mg(2+).

The protein belongs to the transketolase family. DXPS subfamily. In terms of assembly, homodimer. Mg(2+) is required as a cofactor. The cofactor is thiamine diphosphate.

It catalyses the reaction D-glyceraldehyde 3-phosphate + pyruvate + H(+) = 1-deoxy-D-xylulose 5-phosphate + CO2. Its pathway is metabolic intermediate biosynthesis; 1-deoxy-D-xylulose 5-phosphate biosynthesis; 1-deoxy-D-xylulose 5-phosphate from D-glyceraldehyde 3-phosphate and pyruvate: step 1/1. Functionally, catalyzes the acyloin condensation reaction between C atoms 2 and 3 of pyruvate and glyceraldehyde 3-phosphate to yield 1-deoxy-D-xylulose-5-phosphate (DXP). The protein is 1-deoxy-D-xylulose-5-phosphate synthase of Ruegeria pomeroyi (strain ATCC 700808 / DSM 15171 / DSS-3) (Silicibacter pomeroyi).